We begin with the raw amino-acid sequence, 384 residues long: tRNA-specific 2-thiouridylase MnmA (384 aa).

ATP contacts are provided by residues 29 to 36 and leucine 55; that span reads AMSGGVDS. Catalysis depends on cysteine 123, which acts as the Nucleophile. Cysteine 123 and cysteine 220 are oxidised to a cystine. Glycine 147 provides a ligand contact to ATP. Positions 169–171 are interaction with tRNA; it reads RDQ. Cysteine 220 functions as the Cysteine persulfide intermediate in the catalytic mechanism.

It belongs to the MnmA/TRMU family.

Its subcellular location is the cytoplasm. The enzyme catalyses S-sulfanyl-L-cysteinyl-[protein] + uridine(34) in tRNA + AH2 + ATP = 2-thiouridine(34) in tRNA + L-cysteinyl-[protein] + A + AMP + diphosphate + H(+). Its function is as follows. Catalyzes the 2-thiolation of uridine at the wobble position (U34) of tRNA, leading to the formation of s(2)U34. This chain is tRNA-specific 2-thiouridylase MnmA, found in Dinoroseobacter shibae (strain DSM 16493 / NCIMB 14021 / DFL 12).